Consider the following 416-residue polypeptide: Deferrochelatase (416 aa).

Positions 1 to 28 (MSDEQKKPEQIHRRDILKWGAMAGAAVA) form a signal peptide, tat-type signal. Heme b is bound at residue 241 to 243 (GTG). The tract at residues 293 to 318 (QEDTFGRRKSSGAPFGQKKETDPVKL) is disordered. 2 residues coordinate heme b: His-326 and Arg-339.

The protein belongs to the DyP-type peroxidase family. In terms of assembly, component of the iron transporter efeUOB/M complex composed of EfeU, EfeM and EfeB; EfeU is essential for the complex formation. Heme b serves as cofactor. Post-translationally, exported by the Tat system. The position of the signal peptide cleavage has not been experimentally proven.

The protein resides in the secreted. It localises to the cell membrane. It carries out the reaction heme b + 2 H(+) = protoporphyrin IX + Fe(2+). The catalysed reaction is 2 Fe(2+) + H2O2 + 2 H(+) = 2 Fe(3+) + 2 H2O. Functionally, involved in the recovery of exogenous heme iron. Extracts iron from heme while preserving the protoporphyrin ring intact. Part of the iron transporter system efeUOB/M involved in iron import. Catalyzes the peroxide-mediated oxidation of Fe(2+) into Fe(3+); EfeM binds Fe(3+) and delivers it to the cell membrane permease EfeU. This Bacillus subtilis (strain 168) protein is Deferrochelatase.